Consider the following 245-residue polypeptide: Phycocyanobilin:ferredoxin oxidoreductase (245 aa).

This sequence belongs to the HY2 family.

The catalysed reaction is (2R,3Z)-phycocyanobilin + 4 oxidized [2Fe-2S]-[ferredoxin] = biliverdin IXalpha + 4 reduced [2Fe-2S]-[ferredoxin] + 4 H(+). Catalyzes the four-electron reduction of biliverdin IX-alpha (2-electron reduction at both the A and D rings); the reaction proceeds via an isolatable 2-electron intermediate, 181,182-dihydrobiliverdin. The chain is Phycocyanobilin:ferredoxin oxidoreductase from Microcystis aeruginosa (strain NIES-843 / IAM M-2473).